The chain runs to 160 residues: Putative 4-hydroxy-4-methyl-2-oxoglutarate aldolase (160 aa).

Substrate contacts are provided by residues 78–81 and R100; that span reads GDVI. Residue D101 participates in a divalent metal cation binding.

It belongs to the class II aldolase/RraA-like family. Homotrimer. Requires a divalent metal cation as cofactor.

The enzyme catalyses 4-hydroxy-4-methyl-2-oxoglutarate = 2 pyruvate. It catalyses the reaction oxaloacetate + H(+) = pyruvate + CO2. Functionally, catalyzes the aldol cleavage of 4-hydroxy-4-methyl-2-oxoglutarate (HMG) into 2 molecules of pyruvate. Also contains a secondary oxaloacetate (OAA) decarboxylase activity due to the common pyruvate enolate transition state formed following C-C bond cleavage in the retro-aldol and decarboxylation reactions. This Mycolicibacterium paratuberculosis (strain ATCC BAA-968 / K-10) (Mycobacterium paratuberculosis) protein is Putative 4-hydroxy-4-methyl-2-oxoglutarate aldolase.